A 25-amino-acid polypeptide reads, in one-letter code: SPbeta prophage-derived uncharacterized protein YotF (25 aa).

The sequence is that of SPbeta prophage-derived uncharacterized protein YotF (yotF) from Bacillus subtilis (strain 168).